Reading from the N-terminus, the 786-residue chain is Endonuclease MutS2 (786 aa).

333 to 340 (GPNTGGKT) provides a ligand contact to ATP. The Smr domain occupies 711–786 (LDLRGERYDQ…GSGATIVNFK (76 aa)).

Belongs to the DNA mismatch repair MutS family. MutS2 subfamily. Homodimer. Binds to stalled ribosomes, contacting rRNA.

In terms of biological role, endonuclease that is involved in the suppression of homologous recombination and thus may have a key role in the control of bacterial genetic diversity. Functionally, acts as a ribosome collision sensor, splitting the ribosome into its 2 subunits. Detects stalled/collided 70S ribosomes which it binds and splits by an ATP-hydrolysis driven conformational change. Acts upstream of the ribosome quality control system (RQC), a ribosome-associated complex that mediates the extraction of incompletely synthesized nascent chains from stalled ribosomes and their subsequent degradation. Probably generates substrates for RQC. The protein is Endonuclease MutS2 of Lacticaseibacillus paracasei (strain ATCC 334 / BCRC 17002 / CCUG 31169 / CIP 107868 / KCTC 3260 / NRRL B-441) (Lactobacillus paracasei).